A 175-amino-acid chain; its full sequence is Putative adenylate cyclase MJ0240 (175 aa).

Positions 1-175 (MIEVEIKVKI…RKSYLELRGL (175 aa)) constitute a CYTH domain. The Proton acceptor role is filled by Y37.

This sequence belongs to the adenylyl cyclase CyaB family.

It is found in the cytoplasm. It carries out the reaction ATP = 3',5'-cyclic AMP + diphosphate. Its function is as follows. Could catalyze the biosynthesis of cyclic AMP (cAMP) from ATP. The chain is Putative adenylate cyclase MJ0240 from Methanocaldococcus jannaschii (strain ATCC 43067 / DSM 2661 / JAL-1 / JCM 10045 / NBRC 100440) (Methanococcus jannaschii).